The sequence spans 200 residues: Pre-mRNA cleavage factor Im 25 kDa subunit 2 (200 aa).

The 128-residue stretch at 45-172 (GMRTSVEGIL…KLLAVPLFEL (128 aa)) folds into the Nudix hydrolase domain. The segment at 72–74 (TFC) is interaction with RNA. The short motif at 79–100 (GRLKPGENEADGLKRKLTSKLG) is the Nudix box element.

The protein belongs to the Nudix hydrolase family. CPSF5 subfamily. As to quaternary structure, homodimer. Component of the cleavage factor Im (CFIm) complex. Forms a complex with cleavage and polyadenylation specificity factor (CPSF) subunits FIPS5, PAPS4 and CPSF30.

Its subcellular location is the nucleus. Component of the cleavage factor Im (CFIm) complex that plays a key role in pre-mRNA 3'-processing. Involved in association with CPSF6 or CPSF7 in pre-MRNA 3'-end poly(A) site cleavage and poly(A) addition. NUDT21/CPSF5 binds to cleavage and polyadenylation RNA substrates. The homodimer mediates simultaneous sequence-specific recognition of two 5'-UGUA-3' elements within the pre-mRNA. Binds to, but does not hydrolyze mono- and di-adenosine nucleotides. May have a role in mRNA export. The sequence is that of Pre-mRNA cleavage factor Im 25 kDa subunit 2 from Arabidopsis thaliana (Mouse-ear cress).